A 62-amino-acid polypeptide reads, in one-letter code: MTIAFQLAVFALIATSSILLISVPVVFASPDGWLGNKNVVFSGTSLWITLVFLVGILNSLIS.

2 helical membrane-spanning segments follow: residues 8–28 and 41–61; these read AVFALIATSSILLISVPVVFA and FSGTSLWITLVFLVGILNSLI.

The protein belongs to the PsbZ family. PSII is composed of 1 copy each of membrane proteins PsbA, PsbB, PsbC, PsbD, PsbE, PsbF, PsbH, PsbI, PsbJ, PsbK, PsbL, PsbM, PsbT, PsbY, PsbZ, Psb30/Ycf12, at least 3 peripheral proteins of the oxygen-evolving complex and a large number of cofactors. It forms dimeric complexes.

It localises to the plastid. The protein localises to the chloroplast thylakoid membrane. In terms of biological role, may control the interaction of photosystem II (PSII) cores with the light-harvesting antenna, regulates electron flow through the 2 photosystem reaction centers. PSII is a light-driven water plastoquinone oxidoreductase, using light energy to abstract electrons from H(2)O, generating a proton gradient subsequently used for ATP formation. The polypeptide is Photosystem II reaction center protein Z (Morus indica (Mulberry)).